A 76-amino-acid polypeptide reads, in one-letter code: MKFALFSVLVLMLIATFVAADDCPRICTADYTPVCGTPSGGRRSANRTFANQCGLDSHNCLNKGATYDKLHDGECK.

An N-terminal signal peptide occupies residues 1–21; that stretch reads MKFALFSVLVLMLIATFVAAD. Residues 22 to 76 form the Kazal-like domain; sequence DCPRICTADYTPVCGTPSGGRRSANRTFANQCGLDSHNCLNKGATYDKLHDGECK. 3 disulfides stabilise this stretch: Cys-23/Cys-60, Cys-27/Cys-53, and Cys-35/Cys-75.

In terms of tissue distribution, expressed by the salivary gland.

The protein localises to the secreted. Vasodilator protein that inhibits vasoconstriction of isolated rat femoral artery induced by phenylephrine. Since platelet aggregation and vasoconstriction are key hemostatic responses, particularly in small wounds, this protein likely participates in the antihemostatic responses during blood feeding. Blocks L-type calcium channels (Cav1/CACNA1) in left ventricular myocytes isolated from rat hearts. The chain is Vasotab-TY2 from Tabanus yao (Horsefly).